The primary structure comprises 249 residues: tRNA pseudouridine synthase A (249 aa).

The Nucleophile role is filled by aspartate 53. Residue tyrosine 111 participates in substrate binding.

It belongs to the tRNA pseudouridine synthase TruA family. Homodimer.

The catalysed reaction is uridine(38/39/40) in tRNA = pseudouridine(38/39/40) in tRNA. Its function is as follows. Formation of pseudouridine at positions 38, 39 and 40 in the anticodon stem and loop of transfer RNAs. This is tRNA pseudouridine synthase A from Streptococcus gordonii (strain Challis / ATCC 35105 / BCRC 15272 / CH1 / DL1 / V288).